Consider the following 482-residue polypeptide: Chitobiosyldiphosphodolichol beta-mannosyltransferase (482 aa).

At 1-2 the chain is on the lumenal side; the sequence is MA. Residues 3-23 traverse the membrane as a helical segment; that stretch reads ASCVALLVLALLLLVLLLGLW. Residues 24–99 lie on the Cytoplasmic side of the membrane; the sequence is KRGRQTGRAR…DLRGLGAGPR (76 aa). Positions 100 to 120 form an intramembrane region, helical; sequence ILQYGVKVVFQAVYLLWKMMR. The Cytoplasmic segment spans residues 121–482; sequence MDPAAYIFLQ…PCGHPSCRGF (362 aa). Ser242 carries the post-translational modification Phosphoserine.

It belongs to the glycosyltransferase group 1 family. Glycosyltransferase 33 subfamily.

The protein localises to the endoplasmic reticulum membrane. The catalysed reaction is an N,N'-diacetylchitobiosyl-diphospho-di-trans,poly-cis-dolichol + GDP-alpha-D-mannose = a beta-D-Man-(1-&gt;4)-beta-D-GlcNAc-(1-&gt;4)-alpha-D-GlcNAc-diphospho-di-trans,poly-cis-dolichol + GDP + H(+). Its pathway is protein modification; protein glycosylation. In terms of biological role, mannosyltransferase that operates in the biosynthetic pathway of dolichol-linked oligosaccharides, the glycan precursors employed in protein asparagine (N)-glycosylation. The assembly of dolichol-linked oligosaccharides begins on the cytosolic side of the endoplasmic reticulum membrane and finishes in its lumen. The sequential addition of sugars to dolichol pyrophosphate produces dolichol-linked oligosaccharides containing fourteen sugars, including two GlcNAcs, nine mannoses and three glucoses. Once assembled, the oligosaccharide is transferred from the lipid to nascent proteins by oligosaccharyltransferases. Catalyzes, on the cytoplasmic face of the endoplasmic reticulum, the addition of the first mannose residues to the dolichol-linked oligosaccharide chain, to produce Man1GlcNAc(2)-PP-dolichol core oligosaccharide. Man1GlcNAc(2)-PP-dolichol is a substrate for ALG2, the following enzyme in the biosynthetic pathway. The protein is Chitobiosyldiphosphodolichol beta-mannosyltransferase of Mus musculus (Mouse).